The following is a 1074-amino-acid chain: DNA-directed RNA polymerase subunit beta (1074 aa).

It belongs to the RNA polymerase beta chain family. As to quaternary structure, in plastids the minimal PEP RNA polymerase catalytic core is composed of four subunits: alpha, beta, beta', and beta''. When a (nuclear-encoded) sigma factor is associated with the core the holoenzyme is formed, which can initiate transcription.

It localises to the plastid. Its subcellular location is the chloroplast. The enzyme catalyses RNA(n) + a ribonucleoside 5'-triphosphate = RNA(n+1) + diphosphate. Its function is as follows. DNA-dependent RNA polymerase catalyzes the transcription of DNA into RNA using the four ribonucleoside triphosphates as substrates. In Chara vulgaris (Common stonewort), this protein is DNA-directed RNA polymerase subunit beta.